A 754-amino-acid polypeptide reads, in one-letter code: 1,4-alpha-glucan branching enzyme GlgB (754 aa).

Asp431 functions as the Nucleophile in the catalytic mechanism. Glu484 (proton donor) is an active-site residue.

Belongs to the glycosyl hydrolase 13 family. GlgB subfamily. As to quaternary structure, monomer.

The enzyme catalyses Transfers a segment of a (1-&gt;4)-alpha-D-glucan chain to a primary hydroxy group in a similar glucan chain.. It functions in the pathway glycan biosynthesis; glycogen biosynthesis. Catalyzes the formation of the alpha-1,6-glucosidic linkages in glycogen by scission of a 1,4-alpha-linked oligosaccharide from growing alpha-1,4-glucan chains and the subsequent attachment of the oligosaccharide to the alpha-1,6 position. The polypeptide is 1,4-alpha-glucan branching enzyme GlgB (Prochlorococcus marinus subsp. pastoris (strain CCMP1986 / NIES-2087 / MED4)).